The chain runs to 162 residues: MDDATKSSLKAIPLCKTKASPRDGDLWIERLKEEYEAIIAAVQNNKDCDRDWFQLESNERGTKWFGKCWYFHNMVKYEFDVEFDIPITYPVTAPEIALPELDGKTAKMYRGGKICLSEHFKPLWARNTPKFGIAHAFALGLGPWMAVEIPDLIEKGLIQPKA.

Residue Cys-115 is the Glycyl thioester intermediate of the active site.

It belongs to the ubiquitin-conjugating enzyme family. UFC1 subfamily. Interacts with uba-5. In terms of tissue distribution, expressed in the intestine.

Functionally, E2-like enzyme which forms an intermediate with ufm-1. The intermediate is formed via a thioester linkage. The sequence is that of Ubiquitin-fold modifier-conjugating enzyme 1 from Caenorhabditis elegans.